The following is a 430-amino-acid chain: Probable WRKY transcription factor 14 (430 aa).

The segment at residues 211-277 is a DNA-binding region (WRKY); it reads SGEVVPSDLW…YTSEHNHPWP (67 aa). The tract at residues 283–366 is disordered; sequence LAGSTRSSTS…APYRPELHDH (84 aa). Positions 286 to 306 are enriched in low complexity; sequence STRSSTSSSSNPNPSKPSTAN. The span at 307 to 319 shows a compositional bias: polar residues; the sequence is VNSSSIGSQNTIY. A compositionally biased stretch (acidic residues) spans 340–354; the sequence is GDDMELENVDDDDDN.

It belongs to the WRKY group II-e family.

The protein resides in the nucleus. In terms of biological role, transcription factor. Interacts specifically with the W box (5'-(T)TGAC[CT]-3'), a frequently occurring elicitor-responsive cis-acting element. The protein is Probable WRKY transcription factor 14 (WRKY14) of Arabidopsis thaliana (Mouse-ear cress).